The primary structure comprises 247 residues: Ribonuclease PH (247 aa).

Phosphate-binding positions include Arg-90 and 128–130 (GTR).

The protein belongs to the RNase PH family. Homohexameric ring arranged as a trimer of dimers.

It carries out the reaction tRNA(n+1) + phosphate = tRNA(n) + a ribonucleoside 5'-diphosphate. Its function is as follows. Phosphorolytic 3'-5' exoribonuclease that plays an important role in tRNA 3'-end maturation. Removes nucleotide residues following the 3'-CCA terminus of tRNAs; can also add nucleotides to the ends of RNA molecules by using nucleoside diphosphates as substrates, but this may not be physiologically important. Probably plays a role in initiation of 16S rRNA degradation (leading to ribosome degradation) during starvation. The chain is Ribonuclease PH from Synechococcus sp. (strain CC9605).